A 318-amino-acid polypeptide reads, in one-letter code: Molybdenum cofactor insertion chaperone PaoD (318 aa).

In terms of assembly, homodimer in solution. Interacts with MocA.

In terms of biological role, chaperone required for the production of an active PaoABC aldehyde oxidoreductase. Stabilizes the PaoC subunit and is required for the insertion of the molybdenum cofactor into this subunit. Binds molybdenum cofactor. Binds the molybdopterin cytosine dinucleotide (MCD) form of the cofactor after its formation by the molybdenum cofactor cytidylyltransferase MocA. The chain is Molybdenum cofactor insertion chaperone PaoD from Escherichia coli (strain K12).